Here is a 208-residue protein sequence, read N- to C-terminus: Dephospho-CoA kinase (208 aa).

The region spanning 3-208 (EIGLTGGIGS…ALSAAGVTQA (206 aa)) is the DPCK domain. 11–16 (GSGKTR) is a binding site for ATP.

It belongs to the CoaE family.

Its subcellular location is the cytoplasm. The catalysed reaction is 3'-dephospho-CoA + ATP = ADP + CoA + H(+). The protein operates within cofactor biosynthesis; coenzyme A biosynthesis; CoA from (R)-pantothenate: step 5/5. In terms of biological role, catalyzes the phosphorylation of the 3'-hydroxyl group of dephosphocoenzyme A to form coenzyme A. This chain is Dephospho-CoA kinase, found in Cupriavidus pinatubonensis (strain JMP 134 / LMG 1197) (Cupriavidus necator (strain JMP 134)).